The sequence spans 305 residues: Thioredoxin reductase (305 aa).

28–35 (LGIETSSQ) provides a ligand contact to FAD. A disulfide bridge connects residues cysteine 129 and cysteine 132. 272–281 (DCCDWIYRQA) serves as a coordination point for FAD.

It belongs to the class-II pyridine nucleotide-disulfide oxidoreductase family. As to quaternary structure, homodimer. FAD is required as a cofactor.

It localises to the cytoplasm. The catalysed reaction is [thioredoxin]-dithiol + NADP(+) = [thioredoxin]-disulfide + NADPH + H(+). The sequence is that of Thioredoxin reductase (TRXB) from Spironucleus barkhanus.